The chain runs to 356 residues: S-adenosylmethionine:tRNA ribosyltransferase-isomerase (356 aa).

The protein belongs to the QueA family. As to quaternary structure, monomer.

The protein resides in the cytoplasm. It carries out the reaction 7-aminomethyl-7-carbaguanosine(34) in tRNA + S-adenosyl-L-methionine = epoxyqueuosine(34) in tRNA + adenine + L-methionine + 2 H(+). The protein operates within tRNA modification; tRNA-queuosine biosynthesis. Functionally, transfers and isomerizes the ribose moiety from AdoMet to the 7-aminomethyl group of 7-deazaguanine (preQ1-tRNA) to give epoxyqueuosine (oQ-tRNA). The sequence is that of S-adenosylmethionine:tRNA ribosyltransferase-isomerase from Escherichia coli O8 (strain IAI1).